The sequence spans 167 residues: CASP-like protein UU1 (167 aa).

Over 1-17 (MVELESQEAVTVASTAD) the chain is Cytoplasmic. The chain crosses the membrane as a helical span at residues 18–38 (IAVDVSLRLLAAATSLASAVV). The Extracellular segment spans residues 39-54 (VAANHQQRWGVRVDFT). The helical transmembrane segment at 55–75 (LFQVWIGFVAVNLVCTVYAAA) threads the bilayer. Residues 76 to 94 (TAAAARKAMGRWWLHHADA) are Cytoplasmic-facing. The helical transmembrane segment at 95–115 (VVVNLEAAATAGAGAIGSIAM) threads the bilayer. The Extracellular segment spans residues 116–135 (WGNEASGWYAVCRLYRRYCN). A helical transmembrane segment spans residues 136–156 (AGAAALALSLAAVLLLGVACA). Over 157–167 (RSRYPKMPPTT) the chain is Cytoplasmic.

The protein belongs to the Casparian strip membrane proteins (CASP) family. As to quaternary structure, homodimer and heterodimers.

The protein resides in the cell membrane. In Oryza sativa subsp. indica (Rice), this protein is CASP-like protein UU1.